The following is an 84-amino-acid chain: ATP synthase subunit c (84 aa).

The next 2 membrane-spanning stretches (helical) occupy residues 9-29 and 54-74; these read IIGA…GFAI and IVAG…LLFI.

Belongs to the ATPase C chain family. In terms of assembly, F-type ATPases have 2 components, F(1) - the catalytic core - and F(0) - the membrane proton channel. F(1) has five subunits: alpha(3), beta(3), gamma(1), delta(1), epsilon(1). F(0) has three main subunits: a(1), b(2) and c(10-14). The alpha and beta chains form an alternating ring which encloses part of the gamma chain. F(1) is attached to F(0) by a central stalk formed by the gamma and epsilon chains, while a peripheral stalk is formed by the delta and b chains.

The protein resides in the cell inner membrane. In terms of biological role, f(1)F(0) ATP synthase produces ATP from ADP in the presence of a proton or sodium gradient. F-type ATPases consist of two structural domains, F(1) containing the extramembraneous catalytic core and F(0) containing the membrane proton channel, linked together by a central stalk and a peripheral stalk. During catalysis, ATP synthesis in the catalytic domain of F(1) is coupled via a rotary mechanism of the central stalk subunits to proton translocation. Its function is as follows. Key component of the F(0) channel; it plays a direct role in translocation across the membrane. A homomeric c-ring of between 10-14 subunits forms the central stalk rotor element with the F(1) delta and epsilon subunits. The chain is ATP synthase subunit c from Haemophilus influenzae (strain PittEE).